The chain runs to 492 residues: GTPase Der (492 aa).

2 EngA-type G domains span residues 3–166 and 205–378; these read PVVA…VDEV and IKLA…DSAT. GTP-binding positions include 9 to 16, 56 to 60, 118 to 121, 211 to 218, 258 to 262, and 323 to 326; these read GRPNVGKS, DTGGI, NKTD, DTAGV, and NKWD. Residues 379–463 form the KH-like domain; that stretch reads RRVSTAMLTR…PIRIQFKEGE (85 aa).

This sequence belongs to the TRAFAC class TrmE-Era-EngA-EngB-Septin-like GTPase superfamily. EngA (Der) GTPase family. As to quaternary structure, associates with the 50S ribosomal subunit.

Functionally, GTPase that plays an essential role in the late steps of ribosome biogenesis. The protein is GTPase Der of Klebsiella pneumoniae subsp. pneumoniae (strain ATCC 700721 / MGH 78578).